Reading from the N-terminus, the 157-residue chain is Protein-export protein SecB (157 aa).

This sequence belongs to the SecB family. Homotetramer, a dimer of dimers. One homotetramer interacts with 1 SecA dimer.

It is found in the cytoplasm. In terms of biological role, one of the proteins required for the normal export of preproteins out of the cell cytoplasm. It is a molecular chaperone that binds to a subset of precursor proteins, maintaining them in a translocation-competent state. It also specifically binds to its receptor SecA. The protein is Protein-export protein SecB of Shewanella frigidimarina (strain NCIMB 400).